The sequence spans 354 residues: ORC1-type DNA replication protein 9 (354 aa).

Residues 63–67 (TGKTC), Tyr195, and Arg207 each bind ATP.

It belongs to the CDC6/cdc18 family.

Functionally, involved in regulation of DNA replication. The sequence is that of ORC1-type DNA replication protein 9 (orc9-1) from Halobacterium salinarum (strain ATCC 700922 / JCM 11081 / NRC-1) (Halobacterium halobium).